The sequence spans 418 residues: Serine hydroxymethyltransferase (418 aa).

(6S)-5,6,7,8-tetrahydrofolate is bound by residues Leu-121 and 125–127; that span reads GHL. Lys-230 bears the N6-(pyridoxal phosphate)lysine mark. 356-358 contributes to the (6S)-5,6,7,8-tetrahydrofolate binding site; the sequence is SPF.

It belongs to the SHMT family. Homodimer. The cofactor is pyridoxal 5'-phosphate.

Its subcellular location is the cytoplasm. The catalysed reaction is (6R)-5,10-methylene-5,6,7,8-tetrahydrofolate + glycine + H2O = (6S)-5,6,7,8-tetrahydrofolate + L-serine. It functions in the pathway one-carbon metabolism; tetrahydrofolate interconversion. It participates in amino-acid biosynthesis; glycine biosynthesis; glycine from L-serine: step 1/1. In terms of biological role, catalyzes the reversible interconversion of serine and glycine with tetrahydrofolate (THF) serving as the one-carbon carrier. This reaction serves as the major source of one-carbon groups required for the biosynthesis of purines, thymidylate, methionine, and other important biomolecules. Also exhibits THF-independent aldolase activity toward beta-hydroxyamino acids, producing glycine and aldehydes, via a retro-aldol mechanism. This Shewanella pealeana (strain ATCC 700345 / ANG-SQ1) protein is Serine hydroxymethyltransferase.